The primary structure comprises 316 residues: C-type lectin domain family 10 member A (316 aa).

At 1–39 (MTRTYENFQYLENKVKVQGFKNGPLPLQSLLQRLCSGPC) the chain is on the cytoplasmic side. The Endocytosis signal motif lies at 5 to 8 (YENF). The helical; Signal-anchor for type II membrane protein transmembrane segment at 40-60 (HLLLSLGLGLLLLVIICVVGF) threads the bilayer. Topologically, residues 61–316 (QNSKFQRDLV…GLGQTSQESH (256 aa)) are extracellular. 2 N-linked (GlcNAc...) asparagine glycosylation sites follow: N78 and N173. Positions 85-176 (AEIQALTSQG…VATLNNNAST (92 aa)) form a coiled coil. 3 disulfide bridges follow: C181–C192, C209–C304, and C282–C296. Residues 188–305 (HQDSCYWFSH…CQRPYHWVCE (118 aa)) enclose the C-type lectin domain. Ca(2+) contacts are provided by V218, N220, E224, and D243. Residues Q267 and D269 each contribute to the a glycoprotein site. Positions 269, 270, 280, and 281 each coordinate Ca(2+). A glycoprotein is bound at residue E280. A glycoprotein is bound by residues H286 and N292. Residues N292, D293, and E305 each contribute to the Ca(2+) site.

In terms of assembly, interacts with A-, B- and C-domain containing PTPRC/CD45 isoforms: isoform 1/CD45ABC, isoform 3/CD45AB, isoform 5/CD45BC and isoform 7/CD45B. Does not interact with PTPRC/CD45 isoform 2/CD45RO, a memory T cell marker. In terms of tissue distribution, expressed in myeloid antigen presenting cells in lymph nodes and skin (at protein level). Expressed in dermal dendritic cells (at protein level).

The protein localises to the cell membrane. Its subcellular location is the early endosome membrane. It localises to the lysosome membrane. C-type lectin receptor involved in recognition of N-acetylgalactosamine (GalNAc)-terminated glycans by myeloid antigen presenting cells (APCs). Binds in a Ca(2+)-dependent manner to alpha- and beta-linked GalNAc residues on glycoprotein and glycolipid antigens, including alphaGalNAc- and Galbeta1-&gt;3GalNAc-O-Ser/Thr also known as Tn and T antigens, LacdiNAc epitope GalNAcbeta1-&gt;4GlcNAc and its derivative GalNAcbeta1-&gt;4-(Fucalpha1-&gt;3)GlcNAc, O-linked core 5 and 6 glycans, and GM2 and GD2 gangliosides. Acts as a signaling receptor at the interface of APC-T cell interactions. On immature dendritic cells, recognizes Tn antigen-carrying PTPRC/CD45 receptor on effector T cells and downregulates PTRPN/CD45 phosphatase activity with an impact on T cell activation threshold, cytokine production and proliferation. Modulates dendritic cell maturation toward a tolerogenic phenotype leading to generation of regulatory CD4-positive T cell subset with immune suppressive functions. Acts as an endocytic pattern recognition receptor involved in antitumor immunity. During tumorigenesis, recognizes Tn antigens and its sialylated forms Neu5Ac-Tn and Neu5Gc-Tn expressed on tumor cell mucins. On immature dendritic cells, can internalize Tn-terminated immunogens and target them to endolysosomal compartment for MHC class I and II antigen presentation to CD8-positive and CD4-positive T cells, respectively. The protein is C-type lectin domain family 10 member A of Homo sapiens (Human).